Here is a 421-residue protein sequence, read N- to C-terminus: Tryptophan synthase beta chain (421 aa).

At lysine 112 the chain carries N6-(pyridoxal phosphate)lysine.

Belongs to the TrpB family. Tetramer of two alpha and two beta chains. It depends on pyridoxal 5'-phosphate as a cofactor.

The enzyme catalyses (1S,2R)-1-C-(indol-3-yl)glycerol 3-phosphate + L-serine = D-glyceraldehyde 3-phosphate + L-tryptophan + H2O. It participates in amino-acid biosynthesis; L-tryptophan biosynthesis; L-tryptophan from chorismate: step 5/5. Its function is as follows. The beta subunit is responsible for the synthesis of L-tryptophan from indole and L-serine. The chain is Tryptophan synthase beta chain (trpB) from Mycobacterium bovis (strain ATCC BAA-935 / AF2122/97).